The chain runs to 139 residues: Large ribosomal subunit protein uL16c (139 aa).

Residues 1–20 (MLSPKRTKYRKHHRGRMKGK) form a disordered region.

Belongs to the universal ribosomal protein uL16 family. Part of the 50S ribosomal subunit.

The protein resides in the plastid. It localises to the chloroplast. The chain is Large ribosomal subunit protein uL16c from Pleurastrum terricola (Filamentous green alga).